Consider the following 266-residue polypeptide: GTP cyclohydrolase MptA (266 aa).

It belongs to the GTP cyclohydrolase IV family. Homodimer. Fe(2+) is required as a cofactor.

The catalysed reaction is GTP + H2O = 7,8-dihydroneopterin 2',3'-cyclic phosphate + formate + diphosphate + H(+). Its pathway is cofactor biosynthesis; 5,6,7,8-tetrahydromethanopterin biosynthesis. Its function is as follows. Converts GTP to 7,8-dihydro-D-neopterin 2',3'-cyclic phosphate, the first intermediate in the biosynthesis of coenzyme methanopterin. This is GTP cyclohydrolase MptA from Pyrococcus abyssi (strain GE5 / Orsay).